A 305-amino-acid chain; its full sequence is Peroxisome assembly protein 26 (305 aa).

Positions 1–25 are disordered; that stretch reads MKSDCSTSAAPFRGLGGPLRSSEPV. Over 1–246 the chain is Cytoplasmic; that stretch reads MKSDCSTSAA…RQLWDSAVSH (246 aa). The helical; Signal-anchor for type II membrane protein transmembrane segment at 247-267 threads the bilayer; sequence FFSLPFKKSLLAALILCLLVV. Residues 268 to 305 are Peroxisomal matrix-facing; it reads RFDPASPSSLPSLYKLAQLFRWIRKAASSRLYQLRIRD.

The protein belongs to the peroxin-26 family. As to quaternary structure, interacts (via its cytoplasmic domain) with PEX6; interaction is direct and is ATP-dependent. Interacts with PEX1; interaction is indirect and is mediated via interaction with PEX6.

It is found in the peroxisome membrane. In terms of biological role, peroxisomal docking factor that anchors PEX1 and PEX6 to peroxisome membranes. PEX26 is therefore required for the formation of the PEX1-PEX6 AAA ATPase complex, a complex that mediates the extraction of the PEX5 receptor from peroxisomal membrane. The protein is Peroxisome assembly protein 26 (PEX26) of Macaca fascicularis (Crab-eating macaque).